Reading from the N-terminus, the 153-residue chain is 6,7-dimethyl-8-ribityllumazine synthase (153 aa).

Residues Phe-21, 55-57 (AFE), and 79-81 (TVI) contribute to the 5-amino-6-(D-ribitylamino)uracil site. Residue 84–85 (AT) coordinates (2S)-2-hydroxy-3-oxobutyl phosphate. His-87 functions as the Proton donor in the catalytic mechanism. 5-amino-6-(D-ribitylamino)uracil is bound at residue Phe-112. Arg-126 contacts (2S)-2-hydroxy-3-oxobutyl phosphate.

It belongs to the DMRL synthase family. Forms an icosahedral capsid composed of 60 subunits, arranged as a dodecamer of pentamers.

The catalysed reaction is (2S)-2-hydroxy-3-oxobutyl phosphate + 5-amino-6-(D-ribitylamino)uracil = 6,7-dimethyl-8-(1-D-ribityl)lumazine + phosphate + 2 H2O + H(+). The protein operates within cofactor biosynthesis; riboflavin biosynthesis; riboflavin from 2-hydroxy-3-oxobutyl phosphate and 5-amino-6-(D-ribitylamino)uracil: step 1/2. Catalyzes the formation of 6,7-dimethyl-8-ribityllumazine by condensation of 5-amino-6-(D-ribitylamino)uracil with 3,4-dihydroxy-2-butanone 4-phosphate. This is the penultimate step in the biosynthesis of riboflavin. The polypeptide is 6,7-dimethyl-8-ribityllumazine synthase (Bacillus anthracis (strain A0248)).